Here is a 640-residue protein sequence, read N- to C-terminus: 1,4-alpha-glucan branching enzyme GlgB (640 aa).

Residue Asp-318 is the Nucleophile of the active site. The active-site Proton donor is the Glu-371.

Belongs to the glycosyl hydrolase 13 family. GlgB subfamily. As to quaternary structure, monomer.

It catalyses the reaction Transfers a segment of a (1-&gt;4)-alpha-D-glucan chain to a primary hydroxy group in a similar glucan chain.. Its pathway is glycan biosynthesis; glycogen biosynthesis. Its function is as follows. Catalyzes the formation of the alpha-1,6-glucosidic linkages in glycogen by scission of a 1,4-alpha-linked oligosaccharide from growing alpha-1,4-glucan chains and the subsequent attachment of the oligosaccharide to the alpha-1,6 position. This is 1,4-alpha-glucan branching enzyme GlgB from Francisella tularensis subsp. holarctica (strain LVS).